A 492-amino-acid polypeptide reads, in one-letter code: Forkhead box protein O6 (492 aa).

4 disordered regions span residues 1–76 (MAAK…EVGP), 163–235 (SWWM…ASPA), 315–338 (GAGL…APRP), and 466–492 (FNFD…WVPG). The fork-head DNA-binding region spans 88-182 (WGNLSYADLI…KTGKTPRRRA (95 aa)). Residue Ser184 is modified to Phosphoserine. Residues 192 to 203 (LRIKGKASKKKQ) show a composition bias toward basic residues. Residues 225–235 (PAAAKWAASPA) are compositionally biased toward low complexity. The segment covering 472–486 (LPPPPPGLAGAPPPN) has biased composition (pro residues).

Post-translationally, phosphorylation of Ser-184 is be important in regulating the transacriptional activity.

It localises to the cytoplasm. The protein resides in the nucleus. In terms of biological role, transcriptional activator. This Homo sapiens (Human) protein is Forkhead box protein O6 (FOXO6).